Here is a 278-residue protein sequence, read N- to C-terminus: 4-hydroxy-tetrahydrodipicolinate reductase (278 aa).

NAD(+) contacts are provided by residues 13-18 (GAAGKM) and 111-113 (GTT). The active-site Proton donor/acceptor is H167. A (S)-2,3,4,5-tetrahydrodipicolinate-binding site is contributed by H168. Residue K171 is the Proton donor of the active site. 177-178 (GT) lines the (S)-2,3,4,5-tetrahydrodipicolinate pocket.

The protein belongs to the DapB family.

The protein resides in the cytoplasm. It catalyses the reaction (S)-2,3,4,5-tetrahydrodipicolinate + NAD(+) + H2O = (2S,4S)-4-hydroxy-2,3,4,5-tetrahydrodipicolinate + NADH + H(+). The catalysed reaction is (S)-2,3,4,5-tetrahydrodipicolinate + NADP(+) + H2O = (2S,4S)-4-hydroxy-2,3,4,5-tetrahydrodipicolinate + NADPH + H(+). Its pathway is amino-acid biosynthesis; L-lysine biosynthesis via DAP pathway; (S)-tetrahydrodipicolinate from L-aspartate: step 4/4. In terms of biological role, catalyzes the conversion of 4-hydroxy-tetrahydrodipicolinate (HTPA) to tetrahydrodipicolinate. In Mastigocladus laminosus (Fischerella sp.), this protein is 4-hydroxy-tetrahydrodipicolinate reductase.